A 326-amino-acid polypeptide reads, in one-letter code: Tetraacyldisaccharide 4'-kinase (326 aa).

55–62 provides a ligand contact to ATP; it reads TAGGNGKT.

The protein belongs to the LpxK family.

It catalyses the reaction a lipid A disaccharide + ATP = a lipid IVA + ADP + H(+). It participates in glycolipid biosynthesis; lipid IV(A) biosynthesis; lipid IV(A) from (3R)-3-hydroxytetradecanoyl-[acyl-carrier-protein] and UDP-N-acetyl-alpha-D-glucosamine: step 6/6. Transfers the gamma-phosphate of ATP to the 4'-position of a tetraacyldisaccharide 1-phosphate intermediate (termed DS-1-P) to form tetraacyldisaccharide 1,4'-bis-phosphate (lipid IVA). The polypeptide is Tetraacyldisaccharide 4'-kinase (Erwinia tasmaniensis (strain DSM 17950 / CFBP 7177 / CIP 109463 / NCPPB 4357 / Et1/99)).